An 864-amino-acid chain; its full sequence is DNA mismatch repair protein MutS (864 aa).

Residue Gly-607–Ser-614 participates in ATP binding.

It belongs to the DNA mismatch repair MutS family.

This protein is involved in the repair of mismatches in DNA. It is possible that it carries out the mismatch recognition step. This protein has a weak ATPase activity. The protein is DNA mismatch repair protein MutS of Neisseria meningitidis serogroup B (strain ATCC BAA-335 / MC58).